Reading from the N-terminus, the 430-residue chain is NADH-quinone oxidoreductase subunit D 1 (430 aa).

A disordered region spans residues 1 to 36 (MSEAKGVGGIDPRATPGSAGAGERPPMGTVSRAGDG).

Belongs to the complex I 49 kDa subunit family. In terms of assembly, NDH-1 is composed of 14 different subunits. Subunits NuoB, C, D, E, F, and G constitute the peripheral sector of the complex.

The protein localises to the cell inner membrane. The enzyme catalyses a quinone + NADH + 5 H(+)(in) = a quinol + NAD(+) + 4 H(+)(out). Its function is as follows. NDH-1 shuttles electrons from NADH, via FMN and iron-sulfur (Fe-S) centers, to quinones in the respiratory chain. The immediate electron acceptor for the enzyme in this species is believed to be ubiquinone. Couples the redox reaction to proton translocation (for every two electrons transferred, four hydrogen ions are translocated across the cytoplasmic membrane), and thus conserves the redox energy in a proton gradient. The sequence is that of NADH-quinone oxidoreductase subunit D 1 from Anaeromyxobacter dehalogenans (strain 2CP-C).